Reading from the N-terminus, the 268-residue chain is Tryptophan synthase alpha chain (268 aa).

Active-site proton acceptor residues include Glu-40 and Asp-51.

The protein belongs to the TrpA family. As to quaternary structure, tetramer of two alpha and two beta chains.

The enzyme catalyses (1S,2R)-1-C-(indol-3-yl)glycerol 3-phosphate + L-serine = D-glyceraldehyde 3-phosphate + L-tryptophan + H2O. It functions in the pathway amino-acid biosynthesis; L-tryptophan biosynthesis; L-tryptophan from chorismate: step 5/5. Its function is as follows. The alpha subunit is responsible for the aldol cleavage of indoleglycerol phosphate to indole and glyceraldehyde 3-phosphate. In Geobacillus thermodenitrificans (strain NG80-2), this protein is Tryptophan synthase alpha chain.